The following is a 352-amino-acid chain: Peptide chain release factor 1 (352 aa).

Glutamine 233 carries the post-translational modification N5-methylglutamine. Residues asparagine 288–asparagine 309 are disordered. Over residues alanine 289–arginine 306 the composition is skewed to basic and acidic residues.

This sequence belongs to the prokaryotic/mitochondrial release factor family. Methylated by PrmC. Methylation increases the termination efficiency of RF1.

The protein resides in the cytoplasm. Its function is as follows. Peptide chain release factor 1 directs the termination of translation in response to the peptide chain termination codons UAG and UAA. This is Peptide chain release factor 1 (prfA) from Helicobacter pylori (strain J99 / ATCC 700824) (Campylobacter pylori J99).